A 448-amino-acid chain; its full sequence is Tubulin beta chain (448 aa).

8 residues coordinate GTP: Gln-11, Glu-69, Ser-138, Gly-142, Thr-143, Gly-144, Asn-204, and Asn-226. Glu-69 contacts Mg(2+). The tract at residues 429 to 448 (GIDEGDEDYEIEEEKEPLEY) is disordered.

It belongs to the tubulin family. As to quaternary structure, dimer of alpha and beta chains. A typical microtubule is a hollow water-filled tube with an outer diameter of 25 nm and an inner diameter of 15 nM. Alpha-beta heterodimers associate head-to-tail to form protofilaments running lengthwise along the microtubule wall with the beta-tubulin subunit facing the microtubule plus end conferring a structural polarity. Microtubules usually have 13 protofilaments but different protofilament numbers can be found in some organisms and specialized cells. It depends on Mg(2+) as a cofactor.

It is found in the cytoplasm. The protein localises to the cytoskeleton. In terms of biological role, tubulin is the major constituent of microtubules, a cylinder consisting of laterally associated linear protofilaments composed of alpha- and beta-tubulin heterodimers. Microtubules grow by the addition of GTP-tubulin dimers to the microtubule end, where a stabilizing cap forms. Below the cap, tubulin dimers are in GDP-bound state, owing to GTPase activity of alpha-tubulin. This is Tubulin beta chain (nda3) from Schizosaccharomyces pombe (strain 972 / ATCC 24843) (Fission yeast).